A 509-amino-acid polypeptide reads, in one-letter code: Probable cytochrome P450 4ac1 (509 aa).

Positions 317 and 454 each coordinate heme.

It belongs to the cytochrome P450 family. It depends on heme as a cofactor.

The protein localises to the endoplasmic reticulum membrane. Its subcellular location is the microsome membrane. Its function is as follows. May be involved in the metabolism of insect hormones and in the breakdown of synthetic insecticides. The chain is Probable cytochrome P450 4ac1 (Cyp4ac1) from Drosophila melanogaster (Fruit fly).